We begin with the raw amino-acid sequence, 87 residues long: Putative outer membrane protein ArbH (87 aa).

The signal sequence occupies residues 1–23 (MKIKNSYLVIASLLYPISFISTA).

It belongs to the porin LamB (TC 1.B.3) family.

Its subcellular location is the cell outer membrane. In terms of biological role, may be a sugar porin with a broad carbohydrate specificity. This chain is Putative outer membrane protein ArbH (arbH), found in Dickeya chrysanthemi (Pectobacterium chrysanthemi).